We begin with the raw amino-acid sequence, 187 residues long: Putative lipoprotein LppJ (187 aa).

The signal sequence occupies residues 1–28 (MPHSTADRRLRLTRQALLAAAVAPLLAG). Cysteine 29 carries the N-palmitoyl cysteine lipid modification. The S-diacylglycerol cysteine moiety is linked to residue cysteine 29.

Its subcellular location is the cell membrane. The chain is Putative lipoprotein LppJ (lppJ) from Mycobacterium bovis (strain ATCC BAA-935 / AF2122/97).